Reading from the N-terminus, the 127-residue chain is Fluoride-specific ion channel FluC (127 aa).

A run of 4 helical transmembrane segments spans residues isoleucine 4–leucine 24, valine 35–phenylalanine 55, threonine 71–leucine 91, and leucine 101–phenylalanine 121. Positions 75 and 78 each coordinate Na(+).

Belongs to the fluoride channel Fluc/FEX (TC 1.A.43) family.

The protein resides in the cell inner membrane. It catalyses the reaction fluoride(in) = fluoride(out). Its activity is regulated as follows. Na(+) is not transported, but it plays an essential structural role and its presence is essential for fluoride channel function. Functionally, fluoride-specific ion channel. Important for reducing fluoride concentration in the cell, thus reducing its toxicity. This Cronobacter sakazakii (strain ATCC BAA-894) (Enterobacter sakazakii) protein is Fluoride-specific ion channel FluC.